The following is a 133-amino-acid chain: uncharacterized protein (133 aa).

Residues 11 to 31 (YFLISVFLIFIVSGITYFYST) form a helical membrane-spanning segment.

Its subcellular location is the membrane. This is an uncharacterized protein from Borreliella burgdorferi (strain ATCC 35210 / DSM 4680 / CIP 102532 / B31) (Borrelia burgdorferi).